The primary structure comprises 272 residues: Prephenate dehydratase (272 aa).

A Prephenate dehydratase domain is found at 4-179 (AVIYTLPKGT…NKTRFILIGK (176 aa)). One can recognise an ACT domain in the interval 194–269 (IVFELKEDKP…TFINLLGKYP (76 aa)).

As to quaternary structure, homodimer.

The catalysed reaction is prephenate + H(+) = 3-phenylpyruvate + CO2 + H2O. Its pathway is amino-acid biosynthesis; L-phenylalanine biosynthesis; phenylpyruvate from prephenate: step 1/1. Inhibited by L-phenylalanine but not by L-tyrosine or L-tryptophan. In Methanocaldococcus jannaschii (strain ATCC 43067 / DSM 2661 / JAL-1 / JCM 10045 / NBRC 100440) (Methanococcus jannaschii), this protein is Prephenate dehydratase (pheA).